A 189-amino-acid chain; its full sequence is UPF0494 membrane protein C977.06 (189 aa).

The next 3 membrane-spanning stretches (helical) occupy residues 78–98 (WPLLIIWCILIVFAIDKNFEV), 120–140 (IWGPIAIYICLFVLLLLGLIY), and 148–168 (AIPLISIVIAAVVVIIAVAMV).

It belongs to the UPF0494 family.

Its subcellular location is the membrane. The sequence is that of UPF0494 membrane protein C977.06 from Schizosaccharomyces pombe (strain 972 / ATCC 24843) (Fission yeast).